Reading from the N-terminus, the 330-residue chain is Ketol-acid reductoisomerase (NADP(+)) (330 aa).

The KARI N-terminal Rossmann domain occupies 1 to 181; it reads MKVFYDSDFK…GLSRAGVIQT (181 aa). NADP(+) is bound by residues 24-27, Arg47, Ser52, and 82-85; these read YGSQ and DELQ. His107 is an active-site residue. Position 133 (Gly133) interacts with NADP(+). A KARI C-terminal knotted domain is found at 182 to 327; sequence TFKEETETDL…AKLRKMCGLE (146 aa). Mg(2+) contacts are provided by Asp190, Glu194, Glu226, and Glu230. Ser251 serves as a coordination point for substrate.

It belongs to the ketol-acid reductoisomerase family. Requires Mg(2+) as cofactor.

It catalyses the reaction (2R)-2,3-dihydroxy-3-methylbutanoate + NADP(+) = (2S)-2-acetolactate + NADPH + H(+). The enzyme catalyses (2R,3R)-2,3-dihydroxy-3-methylpentanoate + NADP(+) = (S)-2-ethyl-2-hydroxy-3-oxobutanoate + NADPH + H(+). Its pathway is amino-acid biosynthesis; L-isoleucine biosynthesis; L-isoleucine from 2-oxobutanoate: step 2/4. It participates in amino-acid biosynthesis; L-valine biosynthesis; L-valine from pyruvate: step 2/4. In terms of biological role, involved in the biosynthesis of branched-chain amino acids (BCAA). Catalyzes an alkyl-migration followed by a ketol-acid reduction of (S)-2-acetolactate (S2AL) to yield (R)-2,3-dihydroxy-isovalerate. In the isomerase reaction, S2AL is rearranged via a Mg-dependent methyl migration to produce 3-hydroxy-3-methyl-2-ketobutyrate (HMKB). In the reductase reaction, this 2-ketoacid undergoes a metal-dependent reduction by NADPH to yield (R)-2,3-dihydroxy-isovalerate. In Methanococcus maripaludis (strain DSM 14266 / JCM 13030 / NBRC 101832 / S2 / LL), this protein is Ketol-acid reductoisomerase (NADP(+)).